The following is a 212-amino-acid chain: Protein-L-isoaspartate O-methyltransferase (212 aa).

Serine 60 is a catalytic residue.

The protein belongs to the methyltransferase superfamily. L-isoaspartyl/D-aspartyl protein methyltransferase family.

The protein localises to the cytoplasm. It catalyses the reaction [protein]-L-isoaspartate + S-adenosyl-L-methionine = [protein]-L-isoaspartate alpha-methyl ester + S-adenosyl-L-homocysteine. In terms of biological role, catalyzes the methyl esterification of L-isoaspartyl residues in peptides and proteins that result from spontaneous decomposition of normal L-aspartyl and L-asparaginyl residues. It plays a role in the repair and/or degradation of damaged proteins. The sequence is that of Protein-L-isoaspartate O-methyltransferase from Pseudomonas putida (strain W619).